Here is a 279-residue protein sequence, read N- to C-terminus: ATP synthase subunit delta (279 aa).

It belongs to the ATPase delta chain family. F-type ATPases have 2 components, F(1) - the catalytic core - and F(0) - the membrane proton channel. F(1) has five subunits: alpha(3), beta(3), gamma(1), delta(1), epsilon(1). F(0) has three main subunits: a(1), b(2) and c(10-14). The alpha and beta chains form an alternating ring which encloses part of the gamma chain. F(1) is attached to F(0) by a central stalk formed by the gamma and epsilon chains, while a peripheral stalk is formed by the delta and b chains.

It localises to the cell membrane. In terms of biological role, f(1)F(0) ATP synthase produces ATP from ADP in the presence of a proton or sodium gradient. F-type ATPases consist of two structural domains, F(1) containing the extramembraneous catalytic core and F(0) containing the membrane proton channel, linked together by a central stalk and a peripheral stalk. During catalysis, ATP synthesis in the catalytic domain of F(1) is coupled via a rotary mechanism of the central stalk subunits to proton translocation. This protein is part of the stalk that links CF(0) to CF(1). It either transmits conformational changes from CF(0) to CF(1) or is implicated in proton conduction. The polypeptide is ATP synthase subunit delta (Parafrankia sp. (strain EAN1pec)).